Here is a 246-residue protein sequence, read N- to C-terminus: DNA repair protein RecO (246 aa).

Belongs to the RecO family.

Functionally, involved in DNA repair and RecF pathway recombination. The polypeptide is DNA repair protein RecO (Cutibacterium acnes (strain DSM 16379 / KPA171202) (Propionibacterium acnes)).